The following is a 670-amino-acid chain: Polar flagellar hook-associated protein 2 (670 aa).

The interval 226–300 is disordered; the sequence is PLQAPQQPDQ…RSSLRPEERI (75 aa). The segment covering 257–266 has biased composition (acidic residues); that stretch reads AQDDAQDDAS. Positions 272–283 are enriched in low complexity; sequence AAGAEAAKAGQE. Over residues 284–300 the composition is skewed to basic and acidic residues; that stretch reads AIDKANQRSSLRPEERI. The stretch at 342-428 forms a coiled coil; the sequence is GTLTDSYVTT…AQSSFEEYLG (87 aa).

It belongs to the FliD family. In terms of assembly, homopentamer.

The protein localises to the secreted. Its subcellular location is the bacterial flagellum. In terms of biological role, required for the morphogenesis and for the elongation of the flagellar filament by facilitating polymerization of the flagellin monomers at the tip of growing filament. Forms a capping structure, which prevents flagellin subunits (transported through the central channel of the flagellum) from leaking out without polymerization at the distal end. Important for swimming motility. The chain is Polar flagellar hook-associated protein 2 (fliDP) from Vibrio parahaemolyticus serotype O3:K6 (strain RIMD 2210633).